A 385-amino-acid polypeptide reads, in one-letter code: dTDP-4-dehydro-2,3,6-trideoxy-D-glucose 4-aminotransferase (385 aa).

K182 carries the post-translational modification N6-(pyridoxal phosphate)lysine.

Belongs to the DegT/DnrJ/EryC1 family. In terms of assembly, homodimer. The cofactor is pyridoxal 5'-phosphate.

It carries out the reaction dTDP-4-amino-2,3,4,6-tetradeoxy-alpha-D-erythro-hexopyranose + 2-oxoglutarate = dTDP-4-dehydro-2,3,6-trideoxy-alpha-D-hexopyranose + L-glutamate. In terms of biological role, involved in the biosynthesis of forosamine ((4-dimethylamino)-2,3,4,6-tetradeoxy-alpha-D-threo-hexopyranose), a highly deoxygenated sugar component of several bioactive natural products such as the insecticidal spinosyns A and D. In the presence of pyridoxal 5'-phosphate (PLP) and alpha-ketoglutarate, catalyzes the C-4 transamination of dTDP-4-keto-2,3,6-trideoxy-alpha-D-glucose to yield dTDP-4-amino-2,3,4,6-tetradeoxy-alpha-D-glucose. It can also use pyruvate, but less efficiently than alpha-ketoglutarate. Also able to catalyze the C-4 transamination of dTDP-4-keto-2,6-dideoxy-alpha-D-glucose to yield dTDP-4-amino-2,4,6-trideoxy-D-glucose. The protein is dTDP-4-dehydro-2,3,6-trideoxy-D-glucose 4-aminotransferase of Saccharopolyspora spinosa.